We begin with the raw amino-acid sequence, 360 residues long: UPF0283 membrane protein Oant_2119 (360 aa).

Residues 1–30 (MTEKTPRKPASFTVSQASNRPEAADEAPRR) form a disordered region. A run of 2 helical transmembrane segments spans residues 77-97 (ILFGALGILVSFAIGIWTEDL) and 108-128 (LGWTALGVAIIALAAFIAIVV).

This sequence belongs to the UPF0283 family.

Its subcellular location is the cell inner membrane. This Brucella anthropi (strain ATCC 49188 / DSM 6882 / CCUG 24695 / JCM 21032 / LMG 3331 / NBRC 15819 / NCTC 12168 / Alc 37) (Ochrobactrum anthropi) protein is UPF0283 membrane protein Oant_2119.